The following is a 131-amino-acid chain: Arsenate reductase 2 (131 aa).

Residues Cys-10, Cys-82, and Cys-89 each act as nucleophile in the active site. 2 disulfides stabilise this stretch: Cys-10–Cys-82 and Cys-82–Cys-89.

Belongs to the low molecular weight phosphotyrosine protein phosphatase family. Thioredoxin-coupled ArsC subfamily.

The protein resides in the cytoplasm. It carries out the reaction arsenate + [thioredoxin]-dithiol + H(+) = arsenite + [thioredoxin]-disulfide + H2O. Its function is as follows. Catalyzes the reduction of arsenate [As(V)] to arsenite [As(III)]. The chain is Arsenate reductase 2 from Staphylococcus epidermidis (strain ATCC 35984 / DSM 28319 / BCRC 17069 / CCUG 31568 / BM 3577 / RP62A).